The sequence spans 354 residues: Mitogen-activated protein kinase kinase 1 (354 aa).

The Protein kinase domain occupies 68-328 (LEVIKVIGKG…AKELLEHKFV (261 aa)). Residues 74 to 82 (IGKGSSGNV) and K97 each bind ATP. The active-site Proton acceptor is the D190. T218 carries the phosphothreonine modification. At S224 the chain carries Phosphoserine. Residue T228 is modified to Phosphothreonine.

This sequence belongs to the protein kinase superfamily. STE Ser/Thr protein kinase family. MAP kinase kinase subfamily. In terms of assembly, interacts with MEKK1 and MPK4. May form a ternary complex composed of MEKK1 and MKK1/MKK2 and MPK4. Interacts with P.syringae type III effector HopF2. Interacts with MPK11. Phosphorylation at Thr-218 and Ser-224 by MAP kinase kinase kinases positively regulates kinase activity. Expressed in roots, stem, flowers and siliques.

The enzyme catalyses L-seryl-[protein] + ATP = O-phospho-L-seryl-[protein] + ADP + H(+). It catalyses the reaction L-threonyl-[protein] + ATP = O-phospho-L-threonyl-[protein] + ADP + H(+). The catalysed reaction is L-tyrosyl-[protein] + ATP = O-phospho-L-tyrosyl-[protein] + ADP + H(+). With respect to regulation, activated through serine and threonine phosphorylation in response to wounding, cold, drought, salt stresses, abscisic acid (ABA), hydrogen peroxide, bacterial flagellin and laminarin beta-glucan. In terms of biological role, MEKK1, MKK1/MKK2 and MPK4/MPK6 function in a signaling pathway that modulates the expression of genes responding to biotic and abiotic stresses and also plays an important role in pathogen defense by negatively regulating innate immunity. Activates by phosphorylation the downstream MPK4. Acts redundantly with MKK2. MKK1-MPK6 module mediates abscisic acid (ABA)-dependent CAT1 expression with H(2)O(2) production and response to drought and salt stress. MKK1-MPK6 module is also involved in sugar signaling during the process of seed germination. The sequence is that of Mitogen-activated protein kinase kinase 1 (MKK1) from Arabidopsis thaliana (Mouse-ear cress).